Here is a 157-residue protein sequence, read N- to C-terminus: Transcription elongation factor GreA (157 aa).

Residues 10–76 (THEGKQKLEQ…TLENMIRNAK (67 aa)) adopt a coiled-coil conformation.

It belongs to the GreA/GreB family.

Functionally, necessary for efficient RNA polymerase transcription elongation past template-encoded arresting sites. The arresting sites in DNA have the property of trapping a certain fraction of elongating RNA polymerases that pass through, resulting in locked ternary complexes. Cleavage of the nascent transcript by cleavage factors such as GreA or GreB allows the resumption of elongation from the new 3'terminus. GreA releases sequences of 2 to 3 nucleotides. The polypeptide is Transcription elongation factor GreA (Bacillus velezensis (strain DSM 23117 / BGSC 10A6 / LMG 26770 / FZB42) (Bacillus amyloliquefaciens subsp. plantarum)).